Here is a 282-residue protein sequence, read N- to C-terminus: Aldo-keto reductase MT3049 (282 aa).

Y57 acts as the Proton donor in catalysis. 9 residues coordinate NADPH: L197, V235, R237, S238, A239, R243, S246, N247, and R273.

Belongs to the aldo/keto reductase family.

In Mycobacterium tuberculosis (strain CDC 1551 / Oshkosh), this protein is Aldo-keto reductase MT3049.